We begin with the raw amino-acid sequence, 190 residues long: MDVENDRPPRRGAAGERNSGTMIYPALPATEVLVVAECWRAEAGAEAIIHRAVETAAGMVDTDTGDAELAIMLTDDAGIRTLNANWRGIDKPTNVLSFPALQPTGAPSPDDAPRMLGDIAIAYETLRREACDEHKPFDHHLSHLTIHGFLHLIGYDHETDEEAGEMENLERKILARLGIPDPYAPQERMA.

The tract at residues Met1–Gly20 is disordered. Zn(2+) contacts are provided by His147, His151, and His157.

It belongs to the endoribonuclease YbeY family. It depends on Zn(2+) as a cofactor.

Its subcellular location is the cytoplasm. Functionally, single strand-specific metallo-endoribonuclease involved in late-stage 70S ribosome quality control and in maturation of the 3' terminus of the 16S rRNA. This Nitrobacter hamburgensis (strain DSM 10229 / NCIMB 13809 / X14) protein is Endoribonuclease YbeY.